We begin with the raw amino-acid sequence, 2477 residues long: Spectrin alpha chain, non-erythrocytic 1 (2477 aa).

Residues 1 to 14 (MDPSGVKVLETAED) are N-terminal domain. Spectrin repeat units lie at residues 45 to 146 (RFQF…VKLL), 150 to 251 (KLVQ…QGKL), 256 to 358 (EVQR…ARLN), 361 to 465 (YRLQ…QYEQ), 468 to 570 (DLQL…AQLA), 574 to 676 (HLQQ…KLRE), 679 to 781 (QQQQ…QKLA), 785 to 888 (RLQQ…DLED), 891 to 969 (QAQQ…ETGK), and 1096 to 1162 (LFRE…SEGL). The region spanning 967 to 1026 (TGKELVLALYDYQEKSPREVTMKKGDILTLLNSTNKDWWKVEVNDRQGFVPAAYVKKLDP) is the SH3 domain. The residue at position 1176 (Tyr-1176) is a Phosphotyrosine. Spectrin repeat units lie at residues 1234-1336 (EVQR…EKLG), 1339-1442 (HDLQ…MMLD), 1446-1549 (ELQL…KLGE), 1552-1661 (TLQQ…KLKE), 1664-1767 (KQQN…KLNE), 1769-1873 (HRLH…RLEE), 1876-1979 (EYQQ…KLDE), 1983-2086 (FLQF…KLLE), 2097-2199 (LFLT…LELQ), and 2211-2315 (LRQE…NLEQ). Residues 2257-2477 (HQEIRAMRSQ…IEFTRSLFVN (221 aa)) form a C-terminal domain region. 3 EF-hand domains span residues 2328–2363 (EALK…LGYD), 2371–2406 (EPDP…RETE), and 2409–2444 (KSSE…EQAD). The Ca(2+) site is built by Asp-2341, Asp-2343, Ser-2345, Arg-2347, Glu-2352, Asp-2384, Asn-2386, Asp-2388, His-2390, and Glu-2395.

This sequence belongs to the spectrin family. As to quaternary structure, like erythrocyte spectrin, the spectrin-like proteins are capable of forming dimers which can further associate to tetramers. Interacts with ACP1. Post-translationally, phosphorylation of Tyr-1176 decreases sensitivity to cleavage by calpain in vitro.

The protein resides in the cytoplasm. It localises to the cytoskeleton. It is found in the cell cortex. Its function is as follows. Morphologically, spectrin-like proteins appear to be related to spectrin, showing a flexible rod-like structure. They can bind actin but seem to differ in their calmodulin-binding activity. In nonerythroid tissues, spectrins, in association with some other proteins, may play an important role in membrane organization. This Gallus gallus (Chicken) protein is Spectrin alpha chain, non-erythrocytic 1 (SPTAN1).